A 162-amino-acid polypeptide reads, in one-letter code: Large ribosomal subunit protein uL10 (162 aa).

This sequence belongs to the universal ribosomal protein uL10 family. In terms of assembly, part of the ribosomal stalk of the 50S ribosomal subunit. The N-terminus interacts with L11 and the large rRNA to form the base of the stalk. The C-terminus forms an elongated spine to which L12 dimers bind in a sequential fashion forming a multimeric L10(L12)X complex.

In terms of biological role, forms part of the ribosomal stalk, playing a central role in the interaction of the ribosome with GTP-bound translation factors. The polypeptide is Large ribosomal subunit protein uL10 (rplJ) (Mycoplasma genitalium (strain ATCC 33530 / DSM 19775 / NCTC 10195 / G37) (Mycoplasmoides genitalium)).